Consider the following 937-residue polypeptide: Ubiquitin carboxyl-terminal hydrolase 37 (937 aa).

The short motif at 38 to 40 (RDN) is the KEN box 1 element. Short sequence motifs (D-box) lie at residues 76–84 (RMTLTLKDS) and 101–110 (KEYLETVKLG). Positions 132–149 (TAQNDSGLSPSDKQSAPR) are enriched in polar residues. Disordered regions lie at residues 132-216 (TAQN…KAIT) and 232-258 (QSEE…SRTG). The span at 151 to 161 (SSLDSREDSTP) shows a compositional bias: basic and acidic residues. The D-box 3 signature appears at 162–170 (RKPLGSPSR). The KEN box 2 motif lies at 204 to 206 (KEN). Residues 322 to 911 (QGFSNLGNTC…SGYIFFYMHK (590 aa)) enclose the USP domain. Cysteine 331 serves as the catalytic Nucleophile. A compositionally biased stretch (polar residues) spans 609-625 (NSSTLRRASQRPESSGS). Disordered regions lie at residues 609-632 (NSST…DSDS) and 688-710 (TSLC…GDAD). In terms of domain architecture, UIM 1 spans 672–691 (NDEEMLAAVLEMSRHDTSLC). The short motif at 742-744 (KEN) is the KEN box 3 element. 2 UIM domains span residues 766 to 785 (REEQ…QEAR) and 788 to 807 (REDD…FNNS). Residue histidine 866 is the Proton acceptor of the active site.

The protein belongs to the peptidase C19 family.

It catalyses the reaction Thiol-dependent hydrolysis of ester, thioester, amide, peptide and isopeptide bonds formed by the C-terminal Gly of ubiquitin (a 76-residue protein attached to proteins as an intracellular targeting signal).. Deubiquitinase that antagonizes the anaphase-promoting complex (APC/C) during G1/S transition by mediating deubiquitination of APC/C target proteins, thereby promoting S phase entry. Specifically mediates deubiquitination of 'Lys-11'-linked polyubiquitin chains, a specific ubiquitin-linkage type mediated by the APC/C complex. The chain is Ubiquitin carboxyl-terminal hydrolase 37 (usp37) from Danio rerio (Zebrafish).